Here is a 124-residue protein sequence, read N- to C-terminus: Large ribosomal subunit protein bL21 (124 aa).

This sequence belongs to the bacterial ribosomal protein bL21 family. As to quaternary structure, part of the 50S ribosomal subunit. Contacts protein L20.

This protein binds to 23S rRNA in the presence of protein L20. The sequence is that of Large ribosomal subunit protein bL21 from Sinorhizobium medicae (strain WSM419) (Ensifer medicae).